The sequence spans 462 residues: Putative amidase AmiB2 (462 aa).

Active-site charge relay system residues include lysine 81 and serine 155. Serine 179 functions as the Acyl-ester intermediate in the catalytic mechanism.

It belongs to the amidase family.

The catalysed reaction is a monocarboxylic acid amide + H2O = a monocarboxylate + NH4(+). In Mycobacterium bovis (strain ATCC BAA-935 / AF2122/97), this protein is Putative amidase AmiB2 (amiB2).